We begin with the raw amino-acid sequence, 943 residues long: Leucine--tRNA ligase (943 aa).

A 'HIGH' region motif is present at residues 36–46 (PYPSGSMHVGH). The short motif at 623-627 (KMSSS) is the 'KMSKS' region element. A disordered region spans residues 910 to 943 (ASEVVIHTDPEEAPGPEDRKAGARPLRPGIWLEE). Residues 915 to 930 (IHTDPEEAPGPEDRKA) show a composition bias toward basic and acidic residues.

It belongs to the class-I aminoacyl-tRNA synthetase family.

The protein localises to the cytoplasm. The catalysed reaction is tRNA(Leu) + L-leucine + ATP = L-leucyl-tRNA(Leu) + AMP + diphosphate. This chain is Leucine--tRNA ligase, found in Methanopyrus kandleri (strain AV19 / DSM 6324 / JCM 9639 / NBRC 100938).